Here is a 171-residue protein sequence, read N- to C-terminus: Cadmium-induced protein AS8 (171 aa).

The polypeptide is Cadmium-induced protein AS8 (Arabidopsis thaliana (Mouse-ear cress)).